Reading from the N-terminus, the 190-residue chain is GTP cyclohydrolase 1 1 (190 aa).

It belongs to the GTP cyclohydrolase I family. In terms of assembly, homomer.

The enzyme catalyses GTP + H2O = 7,8-dihydroneopterin 3'-triphosphate + formate + H(+). It participates in cofactor biosynthesis; 7,8-dihydroneopterin triphosphate biosynthesis; 7,8-dihydroneopterin triphosphate from GTP: step 1/1. In Pseudomonas putida (strain ATCC 47054 / DSM 6125 / CFBP 8728 / NCIMB 11950 / KT2440), this protein is GTP cyclohydrolase 1 1.